We begin with the raw amino-acid sequence, 255 residues long: Hydroxyacylglutathione hydrolase (255 aa).

7 residues coordinate Zn(2+): H56, H58, D60, H61, H114, D133, and H171.

This sequence belongs to the metallo-beta-lactamase superfamily. Glyoxalase II family. As to quaternary structure, monomer. Requires Zn(2+) as cofactor.

It carries out the reaction an S-(2-hydroxyacyl)glutathione + H2O = a 2-hydroxy carboxylate + glutathione + H(+). It participates in secondary metabolite metabolism; methylglyoxal degradation; (R)-lactate from methylglyoxal: step 2/2. In terms of biological role, thiolesterase that catalyzes the hydrolysis of S-D-lactoyl-glutathione to form glutathione and D-lactic acid. In Nitrobacter hamburgensis (strain DSM 10229 / NCIMB 13809 / X14), this protein is Hydroxyacylglutathione hydrolase.